The primary structure comprises 78 residues: Beta-defensin 135 (78 aa).

Positions 1–24 (MATRSVLLALVVLNLLFYVPPGRS) are cleaved as a signal peptide. 2 cysteine pairs are disulfide-bonded: Cys37/Cys64 and Cys48/Cys66.

The protein belongs to the beta-defensin family.

It localises to the secreted. Its function is as follows. Has antibacterial activity. The polypeptide is Beta-defensin 135 (DEFB135) (Pan troglodytes (Chimpanzee)).